Here is a 163-residue protein sequence, read N- to C-terminus: Extracellular giant hemoglobin major globin subunit B2 (163 aa).

The signal sequence occupies residues 1 to 16 (MIALFVLMGLMAAASA). Residues 19 to 163 (CCSSEDRANV…RIANGISAGL (145 aa)) form the Globin domain. Residues Cys20 and Cys151 are joined by a disulfide bond. Cys83 provides a ligand contact to hydrogen sulfide. His114 serves as a coordination point for heme b.

This sequence belongs to the globin family. As to quaternary structure, the 400 kDa hemoglobin consists of a spherical 24-mer arranged as a double layer of dome-shaped dodecamers. Each dodecamer is composed of the 3-fold trimer of the tetramer A1-A2-B1-B2 having one intra-tetramer (A1-B2) disulfide bond and one inter-tetramer (B1-B2) disulfide bond per tetramer.

It is found in the secreted. The extracellular giant hemoglobin is able to bind and transport oxygen and hydrosulfide simultaneously and reversibly at two different sites. This is Extracellular giant hemoglobin major globin subunit B2 (ghbB2) from Oligobrachia mashikoi (Beard worm).